Here is a 218-residue protein sequence, read N- to C-terminus: Small ribosomal subunit protein uS3c (218 aa).

Positions 47–118 constitute a KH type-2 domain; the sequence is VQKNIRISSG…KLNIAITRIS (72 aa).

This sequence belongs to the universal ribosomal protein uS3 family. As to quaternary structure, part of the 30S ribosomal subunit.

The protein resides in the plastid. It localises to the chloroplast. The chain is Small ribosomal subunit protein uS3c (rps3) from Nasturtium officinale (Watercress).